Here is an 875-residue protein sequence, read N- to C-terminus: GATOR2 complex protein MIOS (875 aa).

WD repeat units follow at residues 58-100 (SDTP…NSKF), 111-155 (KHAR…TPDI), 182-221 (GQNDACLSLCWLPRDQKLLLAGMHRNLAIFDLRNTSQKMF), 223-261 (NTKAVQGVTVDPYFHDRVASFYEGQVAIWDLRKFEKPVL), 265-306 (EQPK…TPIG), and 395-437 (RLRA…KQYT). The segment at 735–781 (VSCNFCGKSISYSCSAVPHQGRGFSQYGVSGSPTKSKVTSCPGCRKP) adopts a C4-type zinc-finger fold. Residues C737 and C740 each contribute to the Zn(2+) site. S759 and S766 each carry phosphoserine. Zn(2+) is bound by residues C775, C778, C788, C827, C830, H832, H835, H838, C849, C854, and C858. Residues 782–863 (LPRCALCLIN…CTCKCMQLDT (82 aa)) form an RING-type; atypical zinc finger.

The protein belongs to the WD repeat mio family. As to quaternary structure, component of the GATOR2 subcomplex, composed of MIOS, SEC13, SEH1L, WDR24 and WDR59. The GATOR2 complex interacts with CASTOR1 and CASTOR2; the interaction is negatively regulated by arginine. CASTOR1 and CASTOR2 convey leucine availability via direct interaction with MIOS. The GATOR2 complex interacts with SESN1, SESN2 and SESN3; the interaction is negatively regulated by amino acids. Interacts with SAR1A and SAR1B; the interaction is direct, disrupted by leucine and mediates the interaction of SAR1A or SAR1B with the GATOR2 complex to negatively regulate the TORC1 signaling upon leucine deprivation.

The protein resides in the lysosome membrane. Its activity is regulated as follows. The GATOR2 complex is negatively regulated by the upstream amino acid sensors CASTOR1 and SESN2, which sequester the GATOR2 complex in absence of amino acids. In the presence of abundant amino acids, GATOR2 is released from CASTOR1 and SESN2 and activated. As a component of the GATOR2 complex, functions as an activator of the amino acid-sensing branch of the mTORC1 signaling pathway. The GATOR2 complex indirectly activates mTORC1 through the inhibition of the GATOR1 subcomplex. GATOR2 probably acts as an E3 ubiquitin-protein ligase toward GATOR1. In the presence of abundant amino acids, the GATOR2 complex mediates ubiquitination of the NPRL2 core component of the GATOR1 complex, leading to GATOR1 inactivation. In the absence of amino acids, GATOR2 is inhibited, activating the GATOR1 complex. Within the GATOR2 complex, MIOS is required to prevent autoubiquitination of WDR24, the catalytic subunit of the complex. The GATOR2 complex is required for brain myelination. In Homo sapiens (Human), this protein is GATOR2 complex protein MIOS.